The primary structure comprises 67 residues: Conotoxin TsMMSK-011 (67 aa).

An N-terminal signal peptide occupies residues 1–20; sequence MMSKLGVLLTICLLLFPLTA. Residues 21–50 constitute a propeptide that is removed on maturation; sequence VQLDGDQPADLPALRTQDISTDHSPWFDPV. Intrachain disulfides connect Cys-53/Cys-65, Cys-54/Cys-61, and Cys-58/Cys-64. The residue at position 63 (Pro-63) is a 4-hydroxyproline.

It belongs to the conotoxin M superfamily. As to expression, expressed by the venom duct.

Its subcellular location is the secreted. The protein is Conotoxin TsMMSK-011 of Conus tessulatus (Tessellate cone).